A 156-amino-acid polypeptide reads, in one-letter code: Small ribosomal subunit protein uS17A (156 aa).

Residue S2 is modified to N-acetylserine. Residues K15, K46, K56, K57, K79, K96, K105, K133, K141, and K148 each participate in a glycyl lysine isopeptide (Lys-Gly) (interchain with G-Cter in ubiquitin) cross-link.

The protein belongs to the universal ribosomal protein uS17 family. In terms of assembly, component of the small ribosomal subunit (SSU). Mature yeast ribosomes consist of a small (40S) and a large (60S) subunit. The 40S small subunit contains 1 molecule of ribosomal RNA (18S rRNA) and 33 different proteins (encoded by 57 genes). The large 60S subunit contains 3 rRNA molecules (25S, 5.8S and 5S rRNA) and 46 different proteins (encoded by 81 genes). N-terminally acetylated by acetyltransferase NatA.

Its subcellular location is the cytoplasm. Component of the ribosome, a large ribonucleoprotein complex responsible for the synthesis of proteins in the cell. The small ribosomal subunit (SSU) binds messenger RNAs (mRNAs) and translates the encoded message by selecting cognate aminoacyl-transfer RNA (tRNA) molecules. The large subunit (LSU) contains the ribosomal catalytic site termed the peptidyl transferase center (PTC), which catalyzes the formation of peptide bonds, thereby polymerizing the amino acids delivered by tRNAs into a polypeptide chain. The nascent polypeptides leave the ribosome through a tunnel in the LSU and interact with protein factors that function in enzymatic processing, targeting, and the membrane insertion of nascent chains at the exit of the ribosomal tunnel. In Saccharomyces cerevisiae (strain ATCC 204508 / S288c) (Baker's yeast), this protein is Small ribosomal subunit protein uS17A.